A 378-amino-acid polypeptide reads, in one-letter code: Small RNA 2'-O-methyltransferase (378 aa).

Asp-61 lines the S-adenosyl-L-methionine pocket. Residues Glu-114, Glu-117, His-118, and His-176 each coordinate Mg(2+).

The protein belongs to the methyltransferase superfamily. HEN1 family. Mg(2+) is required as a cofactor.

The protein localises to the cytoplasm. It carries out the reaction small RNA 3'-end nucleotide + S-adenosyl-L-methionine = small RNA 3'-end 2'-O-methylnucleotide + S-adenosyl-L-homocysteine + H(+). Functionally, methyltransferase that adds a 2'-O-methyl group at the 3'-end of small RNAs. The protein is Small RNA 2'-O-methyltransferase of Schizosaccharomyces pombe (strain 972 / ATCC 24843) (Fission yeast).